The sequence spans 298 residues: Heme A synthase (298 aa).

The Cytoplasmic segment spans residues 1 to 6; that stretch reads MHRSLK. Residues 7–27 form a helical membrane-spanning segment; the sequence is IFGTLTSIGMVIVLMQGALVT. Residues 28–62 are Extracellular-facing; the sequence is KTESGEGCGATWPLCFGEVIPTNPAIETIIEYSHR. C35 and C42 are disulfide-bonded. E58 is a catalytic residue. H61 provides a ligand contact to heme o. Residues 63–83 traverse the membrane as a helical segment; the sequence is IVSGLLGAMVIILAIWAWRKL. Residues 84 to 92 are Cytoplasmic-facing; sequence SHIRETKVM. Residues 93 to 113 form a helical membrane-spanning segment; it reads AILAVLFIIFQGLLGAGAVVF. Residues 114-117 lie on the Extracellular side of the membrane; the sequence is GQSH. Residues 118–138 form a helical membrane-spanning segment; it reads AILALHFGISAISLATVVLLT. H123 is a heme o binding site. Topologically, residues 139-158 are cytoplasmic; it reads TLAFEDGKPNPPALIVKKGY. The chain crosses the membrane as a helical span at residues 159–179; that stretch reads KGYILAVFAYCYAVIYTGAYV. Topologically, residues 180 to 209 are extracellular; the sequence is KHTQATLACGDFPLCNGQWIPMLSGPVGAH. C188 and C194 are oxidised to a cystine. The helical transmembrane segment at 210–230 threads the bilayer; sequence FFHRVAGTLLLILLVVALIWT. H212 is a binding site for heme b. Residues 231 to 244 lie on the Cytoplasmic side of the membrane; it reads LRKYSHYRSLVWTH. A helical membrane pass occupies residues 245-265; sequence ILCVILVLTQYATGISIVLTG. The Extracellular segment spans residues 266-271; that stretch reads NELFVA. A helical transmembrane segment spans residues 272–292; that stretch reads MMHALIVSILFTTLCYIVMIL. Residue H274 participates in heme b binding. The Cytoplasmic segment spans residues 293 to 298; that stretch reads SRNKAV.

Belongs to the COX15/CtaA family. Type 1 subfamily. In terms of assembly, interacts with CtaB. The cofactor is heme b.

The protein resides in the cell membrane. It catalyses the reaction Fe(II)-heme o + 2 A + H2O = Fe(II)-heme a + 2 AH2. The protein operates within porphyrin-containing compound metabolism; heme A biosynthesis; heme A from heme O: step 1/1. Catalyzes the conversion of heme O to heme A by two successive hydroxylations of the methyl group at C8. The first hydroxylation forms heme I, the second hydroxylation results in an unstable dihydroxymethyl group, which spontaneously dehydrates, resulting in the formyl group of heme A. The polypeptide is Heme A synthase (Halalkalibacterium halodurans (strain ATCC BAA-125 / DSM 18197 / FERM 7344 / JCM 9153 / C-125) (Bacillus halodurans)).